We begin with the raw amino-acid sequence, 279 residues long: Putative phosphoenolpyruvate synthase regulatory protein (279 aa).

159-166 (GVSRSGKT) provides a ligand contact to ADP.

It belongs to the pyruvate, phosphate/water dikinase regulatory protein family. PSRP subfamily.

It catalyses the reaction [pyruvate, water dikinase] + ADP = [pyruvate, water dikinase]-phosphate + AMP + H(+). The enzyme catalyses [pyruvate, water dikinase]-phosphate + phosphate + H(+) = [pyruvate, water dikinase] + diphosphate. Bifunctional serine/threonine kinase and phosphorylase involved in the regulation of the phosphoenolpyruvate synthase (PEPS) by catalyzing its phosphorylation/dephosphorylation. In Ralstonia nicotianae (strain ATCC BAA-1114 / GMI1000) (Ralstonia solanacearum), this protein is Putative phosphoenolpyruvate synthase regulatory protein.